The chain runs to 107 residues: Ribonuclease P protein subunit rpr2 (107 aa).

Residues Cys-59, Cys-62, Cys-93, and Cys-96 each contribute to the Zn(2+) site.

Belongs to the eukaryotic/archaeal RNase P protein component 4 family. Requires Zn(2+) as cofactor.

The protein localises to the cytoplasm. It localises to the nucleus. The enzyme catalyses Endonucleolytic cleavage of RNA, removing 5'-extranucleotides from tRNA precursor.. Component of ribonuclease P, a protein complex that generates mature tRNA molecules by cleaving their 5'-ends. This is Ribonuclease P protein subunit rpr2 (rpr2) from Schizosaccharomyces pombe (strain 972 / ATCC 24843) (Fission yeast).